The chain runs to 73 residues: Crustacean hyperglycemic hormone (73 aa).

3 cysteine pairs are disulfide-bonded: Cys-7–Cys-43, Cys-23–Cys-39, and Cys-26–Cys-52. Residue Val-73 is modified to Valine amide.

It belongs to the arthropod CHH/MIH/GIH/VIH hormone family. Produced by the medulla terminalis X-organ in the eyestalks and transported to the sinus gland where they are stored and released.

The protein localises to the secreted. In terms of biological role, hormone found in the sinus gland of isopods and decapods which controls the blood sugar level. Has a secretagogue action over the amylase released from the midgut gland. May act as a stress hormone and may be involved in the control of molting and reproduction. The sequence is that of Crustacean hyperglycemic hormone from Jasus lalandii (Cape rock lobster).